Here is a 716-residue protein sequence, read N- to C-terminus: DNA replication licensing factor MCM7 (716 aa).

The C4-type zinc-finger motif lies at 178–205; sequence CEDCGHEIYQEVTSRVFMPLFKCPSSRC. The MCM domain maps to 326–531; sequence IYNKLSRSLA…MDSDLELAKH (206 aa). 376-383 is a binding site for ATP; it reads GDPGVAKS. Residues 508–511 carry the Arginine finger motif; sequence SRFD.

This sequence belongs to the MCM family. Component of the minichromosome maintenance (MCM) complex, a heterotetramer composed of MCM2, MCM3, MCM4, MCM5, MCM6 and MCM7. Interacts with ETG1. As to expression, expressed in shoot apex and flower buds.

The protein localises to the nucleus. It localises to the cytoplasm. It carries out the reaction ATP + H2O = ADP + phosphate + H(+). Its function is as follows. Probable component of the MCM2-7 complex (MCM complex) that may function as a DNA helicase and which is essential to undergo a single round of replication initiation and elongation per cell cycle in eukaryotic cells. Required for megagametophyte and embryo development. This is DNA replication licensing factor MCM7 (MCM7) from Arabidopsis thaliana (Mouse-ear cress).